Here is a 739-residue protein sequence, read N- to C-terminus: Prestin (739 aa).

Topologically, residues 1 to 76 (MEHVTVSEEP…PILTWLPSYP (76 aa)) are cytoplasmic. Residues 77–106 (LKEYLFGDIVSGISTGVMQLPQGLAYAMLA) form a helical membrane-spanning segment. Residues 107 to 109 (AVP) are Extracellular-facing. Residues 110-127 (PVFGLYSSFYPVLLYTFF) form a helical membrane-spanning segment. The Cytoplasmic portion of the chain corresponds to 128–138 (GTSKHISIGTF). The helical transmembrane segment at 139–152 (AVISLMIGGVAVRE) threads the bilayer. The Extracellular segment spans residues 153-169 (APDSMFMVNGTNSSLVV). N-linked (GlcNAc...) asparagine glycans are attached at residues asparagine 161 and asparagine 164. The chain crosses the membrane as a helical span at residues 170-199 (NIEARDSRRVEVVVALTTLVGIIQFVLGLL). Residues 200 to 209 (RFGFLAIYLT) lie on the Cytoplasmic side of the membrane. The helical transmembrane segment at 210–233 (EPLVRGFTTAAAVHVSVSQLKYLL) threads the bilayer. Residues 234–244 (GVKTARFNGPL) lie on the Extracellular side of the membrane. Positions 245–256 (SVVYSLDAVLRN) form an intramembrane region, helical. The Extracellular portion of the chain corresponds to 257–261 (IADTN). Residues 262 to 285 (IVTLIIGLGCTVFLYIIKQLNERF) form a helical membrane-spanning segment. The Cytoplasmic segment spans residues 286-294 (KKKLLIPIP). A helical transmembrane segment spans residues 295-310 (GEIIVVIVSTGISYGM). The Extracellular segment spans residues 311–335 (LMSENYGVDVVGKIPTGLLPPKVPD). A helical membrane pass occupies residues 336–370 (FSVFPNLFADAVPIAVVGFSITISLAKTFALKYGY). Residues 371 to 373 (SVD) lie on the Cytoplasmic side of the membrane. The chain crosses the membrane as a helical span at residues 374–391 (GNQELIALGLCNFVSSFF). Over 392-399 (HTFVVTAS) the chain is Extracellular. Residues 400–409 (MSRSLVQEST) form a helical membrane-spanning segment. Serine 401 provides a ligand contact to salicylate. At 410-413 (GGHT) the chain is on the cytoplasmic side. The helical transmembrane segment at 414-435 (EIAGLLASLLVLLVVVAIGFVF) threads the bilayer. The Extracellular segment spans residues 436-439 (QPLP). The chain crosses the membrane as a helical span at residues 440-467 (TTVLAAIIMVNLLGMFKQTRDIPVLWRK). Serine 468 is a topological domain (cytoplasmic). Residues 469–484 (KIELAIWLVSFFASVL) traverse the membrane as a helical segment. At 485–486 (LG) the chain is on the extracellular side. Residues 487–507 (LDYGLAVAMAFAILTVIYRTQ) form a helical membrane-spanning segment. The interval 508-731 (RPKNVVLGQI…AVLQCKRWRD (224 aa)) is extended region for STAS domain. Over 508–739 (RPKNVVLGQI…RDLPVHPNIH (232 aa)) the chain is Cytoplasmic. The region spanning 528 to 726 (EYEEAEECSG…PTIHDAVLQC (199 aa)) is the STAS domain.

It belongs to the SLC26A/SulP transporter (TC 2.A.53) family. Homodimer. Interacts (via STAS domain) with CALM; this interaction is calcium-dependent. As to expression, expressed in hair cells of the auditory organs.

It localises to the cell membrane. It catalyses the reaction oxalate(in) + chloride(out) = oxalate(out) + chloride(in). It carries out the reaction sulfate(out) + chloride(in) = sulfate(in) + chloride(out). With respect to regulation, sulfate/chloride antiport activity is inhibited by salicylate; this inhibition is reversible. Its function is as follows. Electrogenic antiporter that exchanges sulfate or oxalate for chloride ion in a strictly coupled manner with a 1:1 stoichiometry. Adopts a dynamic conformation, which alternates between the exposure of the central binding site to the extra- and intracellular solutions leading to an inward-to-outward conformational transition during the transport cycle. Generates voltage-dependent charge movements resembling to the non-linear capacitance (NLC) of the cell membrane, but which are not associated to electromotile activity. This is Prestin from Danio rerio (Zebrafish).